We begin with the raw amino-acid sequence, 341 residues long: Oxidoreductase swnN (341 aa).

The protein belongs to the NmrA-type oxidoreductase family. Isoflavone reductase subfamily.

It participates in mycotoxin biosynthesis. In terms of biological role, oxidoreductase; part of the gene cluster that mediates the biosynthesis of swainsonine (SW), a cytotoxic fungal alkaloid and a potential cancer therapy drug. Swainsonine production occurs via a multibranched pathway and is dispensable for fungal colonization of plants and infection of insect hosts. The first step of swainsonine biosynthesis is the production of the precursor pipecolic acid (PA) via conversion of L-lysine (Lys) to 1-piperideine-6-carboxylate (P6C) by the aminotransferase swnA, the latter being further reduced to PA by the reductase swnR. PA can be converted from lysine by both the SW biosynthetic cluster and the unclustered genes such as lysine cyclodeaminase. The PKS-NRPS hybrid synthetase swnK uptakes and condensates PA and malonyl-CoA with and without skipping of the ketoreductase (KR) domain in order to produce 3 intermediates, 1-oxoindolizidine, (1S)-1-hydroxyindolizin, and (1R)-1-hydroxyindolizine; with the transisomer (1S)-1-hydroxyindolizin being predominant. The terminal thioester reductase (TE) domain of swnK is involved in reduction of the thioester bond to release the intermediate aldehydes. The oxidoreductase swnN could contribute to the reduction of 1-oxoindolizidine to (1S)-1-hydroxyindolizin and (1R)-1-hydroxyindolizine, contributing to the major route of SW production. The dioxygenase swnH2 would be responsible for the oxidization of (1R)-1-hydroxyindolizine into (1R,2S)-1,2-dihydroxyindolizine and of (1S)-1-hydroxyindolizin to yield both (1R,2S)-1,2-dihydroxyindolizine and (1S,2S)-1,2-dihydroxyindolizine. The dioxygenase swnH1 then performs the conversion of the 1,2-dihydroxyindolizine epimers to SW. The protein is Oxidoreductase swnN of Metarhizium robertsii (strain ARSEF 23 / ATCC MYA-3075) (Metarhizium anisopliae (strain ARSEF 23)).